A 488-amino-acid chain; its full sequence is UDP-N-acetylmuramate--L-alanine ligase (488 aa).

Residue 122 to 128 (GTHGKTT) coordinates ATP.

This sequence belongs to the MurCDEF family.

The protein localises to the cytoplasm. It carries out the reaction UDP-N-acetyl-alpha-D-muramate + L-alanine + ATP = UDP-N-acetyl-alpha-D-muramoyl-L-alanine + ADP + phosphate + H(+). The protein operates within cell wall biogenesis; peptidoglycan biosynthesis. Functionally, cell wall formation. This is UDP-N-acetylmuramate--L-alanine ligase from Mycobacterium ulcerans (strain Agy99).